Reading from the N-terminus, the 282-residue chain is MNAPIVRPLAELRSMVRGWKSRGETIGVVPTMGALHEGHLSLVRAARASCDRVIVTLFVNPRQFNNTEDYAKYPRTEHTDAALLAPLGVDALFVPDGDEVYPPDHATVISVSGVTAPLEGAHRPGHFDGVATVVTLLFNMTGADRAFFGEKDWQQLQLVRRLVQDLKLPVEIVPCPCVRAEDGLALSSRNQRLTAEGRTRAAALPRTLFEAARRIEAGAPTAEALAAAQEGLEAAGIGPVEYLELRDGETLGEPQLGRPARLLVAAWLDGVRLIDNVAVTLR.

32-39 contacts ATP; sequence MGALHEGH. Histidine 39 functions as the Proton donor in the catalytic mechanism. Glutamine 63 contacts (R)-pantoate. Glutamine 63 serves as a coordination point for beta-alanine. Residue 149–152 participates in ATP binding; the sequence is GEKD. Residue glutamine 155 coordinates (R)-pantoate. ATP contacts are provided by residues valine 178 and 186–189; that span reads LSSR.

Belongs to the pantothenate synthetase family. In terms of assembly, homodimer.

It is found in the cytoplasm. The catalysed reaction is (R)-pantoate + beta-alanine + ATP = (R)-pantothenate + AMP + diphosphate + H(+). It participates in cofactor biosynthesis; (R)-pantothenate biosynthesis; (R)-pantothenate from (R)-pantoate and beta-alanine: step 1/1. Functionally, catalyzes the condensation of pantoate with beta-alanine in an ATP-dependent reaction via a pantoyl-adenylate intermediate. This Paracoccus denitrificans (strain Pd 1222) protein is Pantothenate synthetase.